A 212-amino-acid chain; its full sequence is Thymidylate kinase (212 aa).

ATP is bound at residue Gly-11–Thr-18.

The protein belongs to the thymidylate kinase family.

It carries out the reaction dTMP + ATP = dTDP + ADP. Functionally, phosphorylation of dTMP to form dTDP in both de novo and salvage pathways of dTTP synthesis. This is Thymidylate kinase from Streptococcus pneumoniae (strain Taiwan19F-14).